We begin with the raw amino-acid sequence, 774 residues long: E3 ubiquitin-protein ligase RFWD3 (774 aa).

2 disordered regions span residues 32–126 and 203–281; these read GTIE…TAGA and PYPL…SAME. Phosphoserine; by ATM and ATR occurs at positions 59 and 75. Acidic residues predominate over residues 92 to 103; that stretch reads LTEEVQPSEENM. Residues 108–121 show a composition bias toward polar residues; it reads PGTSEEPSQGSGAN. Acidic residues predominate over residues 223 to 242; it reads SDSDGSAEDEEVVVQAEEPE. The RING-type; degenerate zinc finger occupies 288 to 332; that stretch reads CTICLEQWTNAGDHRISALRCGHLFGFRCISKWLKGQTRKCPQCN. Positions 358–403 form a coiled coil; that stretch reads RMKSDLLNEQMLRKQAELESAQCRLQLQVLIDKCTKLNSRVQDLEK. WD repeat units lie at residues 493–535, 536–568, and 583–628; these read IPMH…VVQT, YNTG…LIYD, and KARC…SHKP.

In terms of assembly, interacts with MDM2 and p53/TP53. Binds to the RPA complex via direct interaction with RPA2. Interacts with RAD51. Post-translationally, phosphorylated at Ser-59 and Ser-75 upon DNA damage by ATM or ATR. ATM phosphorylation occurs at early times upon DNA damage, while ATR is the major kinase at later times. Phosphorylation by ATM and ATR is required to stabilize p53/TP53. Part of the phosphorylation depends upon RPA2 presence.

It is found in the nucleus. Its subcellular location is the PML body. It localises to the cytoplasm. The enzyme catalyses S-ubiquitinyl-[E2 ubiquitin-conjugating enzyme]-L-cysteine + [acceptor protein]-L-lysine = [E2 ubiquitin-conjugating enzyme]-L-cysteine + N(6)-ubiquitinyl-[acceptor protein]-L-lysine.. It participates in protein modification; protein ubiquitination. In terms of biological role, E3 ubiquitin-protein ligase required for the repair of DNA interstrand cross-links (ICL) in response to DNA damage. Plays a key role in RPA-mediated DNA damage signaling and repair. Acts by mediating ubiquitination of the RPA complex (RPA1, RPA2 and RPA3 subunits) and RAD51 at stalled replication forks, leading to remove them from DNA damage sites and promote homologous recombination. Also mediates the ubiquitination of p53/TP53 in the late response to DNA damage, and acts as a positive regulator of p53/TP53 stability, thereby regulating the G1/S DNA damage checkpoint. May act by catalyzing the formation of short polyubiquitin chains on p53/TP53 that are not targeted to the proteasome. In response to ionizing radiation, interacts with MDM2 and enhances p53/TP53 ubiquitination, possibly by restricting MDM2 from extending polyubiquitin chains on ubiquitinated p53/TP53. Required to translesion DNA synthesis across DNA-protein cross-link adducts by catalyzing ubiquitination of proteins on single-stranded DNA (ssDNA). This is E3 ubiquitin-protein ligase RFWD3 (Rfwd3) from Mus musculus (Mouse).